A 105-amino-acid chain; its full sequence is Secreted RxLR effector protein 158 (105 aa).

The N-terminal stretch at 1-22 is a signal peptide; the sequence is MRGAHYVAIVLLVAAGGQTAAG. Residues 50–71 carry the RxLR-dEER motif; that stretch reads RALQASRNPKDDLMFSAGDEER.

It belongs to the RxLR effector family.

It is found in the secreted. The protein localises to the host nucleus. Its subcellular location is the host cytoplasm. Functionally, secreted effector that partially suppresses the host cell death induced by cell death-inducing proteins. The chain is Secreted RxLR effector protein 158 from Plasmopara viticola (Downy mildew of grapevine).